Reading from the N-terminus, the 240-residue chain is 1-(5-phosphoribosyl)-5-[(5-phosphoribosylamino)methylideneamino] imidazole-4-carboxamide isomerase (240 aa).

Asp10 serves as the catalytic Proton acceptor. Asp131 serves as the catalytic Proton donor.

It belongs to the HisA/HisF family.

Its subcellular location is the cytoplasm. It catalyses the reaction 1-(5-phospho-beta-D-ribosyl)-5-[(5-phospho-beta-D-ribosylamino)methylideneamino]imidazole-4-carboxamide = 5-[(5-phospho-1-deoxy-D-ribulos-1-ylimino)methylamino]-1-(5-phospho-beta-D-ribosyl)imidazole-4-carboxamide. It participates in amino-acid biosynthesis; L-histidine biosynthesis; L-histidine from 5-phospho-alpha-D-ribose 1-diphosphate: step 4/9. In Shouchella clausii (strain KSM-K16) (Alkalihalobacillus clausii), this protein is 1-(5-phosphoribosyl)-5-[(5-phosphoribosylamino)methylideneamino] imidazole-4-carboxamide isomerase.